We begin with the raw amino-acid sequence, 360 residues long: Peptide chain release factor 1 (360 aa).

Gln-235 carries the N5-methylglutamine modification.

Belongs to the prokaryotic/mitochondrial release factor family. Methylated by PrmC. Methylation increases the termination efficiency of RF1.

The protein localises to the cytoplasm. In terms of biological role, peptide chain release factor 1 directs the termination of translation in response to the peptide chain termination codons UAG and UAA. This is Peptide chain release factor 1 from Paraburkholderia phymatum (strain DSM 17167 / CIP 108236 / LMG 21445 / STM815) (Burkholderia phymatum).